Reading from the N-terminus, the 80-residue chain is Metallothionein-like protein type 2 (80 aa).

It belongs to the metallothionein superfamily. Type 15 family.

In terms of biological role, metallothioneins have a high content of cysteine residues that bind various heavy metals. This Brassica campestris (Field mustard) protein is Metallothionein-like protein type 2.